A 78-amino-acid chain; its full sequence is Neurogranin (78 aa).

Residue methionine 1 is modified to N-acetylmethionine. Cysteines 3 and 51 form a disulfide. One can recognise an IQ domain in the interval 26 to 47 (ANAAAAKIQASFRGHMARKKIK). At serine 36 the chain carries Phosphoserine; by PHK and PKC. Residues 39–78 (GHMARKKIKSGECGRKGPGPGGPGGAGGARGGAGGGPSGD) form a disordered region. The region spanning 48 to 78 (SGECGRKGPGPGGPGGAGGARGGAGGGPSGD) is the Collagen-like domain. Residues 54–78 (KGPGPGGPGGAGGARGGAGGGPSGD) show a composition bias toward gly residues. A Citrulline; partial modification is found at arginine 68. Arginine 68 carries the post-translational modification Omega-N-methylarginine.

The protein belongs to the neurogranin family. In terms of assembly, interacts with apo-calmodulin; this interaction decreases the affinity of calmodulin for calcium ions. Post-translationally, disulfide bond formation is redox-sensitive. The cysteine residues are readily oxidized by several nitric acid (NO) donors and other oxidants to form intramolecular disulfide. Cys-51 can form a disulfide with any other of the cysteine residues with an order of reactivity Cys-9 &gt; Cys-4 &gt; Cys-3. In terms of processing, phosphorylated at Ser-36 by PHK and PKC, phosphorylation prevents interaction with Calmodulin and interrupts several learning- and memory-associated functions.

The protein localises to the cytoplasm. Its subcellular location is the synapse. The protein resides in the cell projection. It localises to the dendritic spine. Regulates the affinity of calmodulin for calcium. Involved in synaptic plasticity and spatial learning. The protein is Neurogranin (Nrgn) of Mus musculus (Mouse).